Reading from the N-terminus, the 314-residue chain is 2,3-dihydroxyphenylpropionate/2,3-dihydroxicinnamic acid 1,2-dioxygenase (314 aa).

Histidine 115 functions as the Proton donor in the catalytic mechanism. Catalysis depends on histidine 179, which acts as the Proton acceptor.

Belongs to the LigB/MhpB extradiol dioxygenase family. Homotetramer. Fe(2+) serves as cofactor.

It catalyses the reaction 3-(2,3-dihydroxyphenyl)propanoate + O2 = (2Z,4E)-2-hydroxy-6-oxonona-2,4-dienedioate + H(+). The enzyme catalyses (2E)-3-(2,3-dihydroxyphenyl)prop-2-enoate + O2 = (2Z,4E,7E)-2-hydroxy-6-oxonona-2,4,7-trienedioate + H(+). Its pathway is aromatic compound metabolism; 3-phenylpropanoate degradation. Functionally, catalyzes the non-heme iron(II)-dependent oxidative cleavage of 2,3-dihydroxyphenylpropionic acid and 2,3-dihydroxicinnamic acid into 2-hydroxy-6-ketononadienedioate and 2-hydroxy-6-ketononatrienedioate, respectively. This is 2,3-dihydroxyphenylpropionate/2,3-dihydroxicinnamic acid 1,2-dioxygenase from Escherichia coli O81 (strain ED1a).